We begin with the raw amino-acid sequence, 350 residues long: Holliday junction branch migration complex subunit RuvB (350 aa).

Residues 1-183 are large ATPase domain (RuvB-L); the sequence is MSAERLVNPH…FVAVHRLVFY (183 aa). ATP-binding positions include L22, R23, G64, K67, T68, S69, 130-132, R173, Y183, and R220; that span reads EDF. T68 is a Mg(2+) binding site. The segment at 184–254 is small ATPAse domain (RuvB-S); the sequence is SDDAMTEIVS…VARDALAQLE (71 aa). Residues 257–350 are head domain (RuvB-H); that stretch reads ELGLDENDRR…ESGPQQATLF (94 aa). R312 and R317 together coordinate DNA. The disordered stretch occupies residues 331-350; that stretch reads YPERTLPADDESGPQQATLF.

This sequence belongs to the RuvB family. In terms of assembly, homohexamer. Forms an RuvA(8)-RuvB(12)-Holliday junction (HJ) complex. HJ DNA is sandwiched between 2 RuvA tetramers; dsDNA enters through RuvA and exits via RuvB. An RuvB hexamer assembles on each DNA strand where it exits the tetramer. Each RuvB hexamer is contacted by two RuvA subunits (via domain III) on 2 adjacent RuvB subunits; this complex drives branch migration. In the full resolvosome a probable DNA-RuvA(4)-RuvB(12)-RuvC(2) complex forms which resolves the HJ.

It localises to the cytoplasm. It carries out the reaction ATP + H2O = ADP + phosphate + H(+). Its function is as follows. The RuvA-RuvB-RuvC complex processes Holliday junction (HJ) DNA during genetic recombination and DNA repair, while the RuvA-RuvB complex plays an important role in the rescue of blocked DNA replication forks via replication fork reversal (RFR). RuvA specifically binds to HJ cruciform DNA, conferring on it an open structure. The RuvB hexamer acts as an ATP-dependent pump, pulling dsDNA into and through the RuvAB complex. RuvB forms 2 homohexamers on either side of HJ DNA bound by 1 or 2 RuvA tetramers; 4 subunits per hexamer contact DNA at a time. Coordinated motions by a converter formed by DNA-disengaged RuvB subunits stimulates ATP hydrolysis and nucleotide exchange. Immobilization of the converter enables RuvB to convert the ATP-contained energy into a lever motion, pulling 2 nucleotides of DNA out of the RuvA tetramer per ATP hydrolyzed, thus driving DNA branch migration. The RuvB motors rotate together with the DNA substrate, which together with the progressing nucleotide cycle form the mechanistic basis for DNA recombination by continuous HJ branch migration. Branch migration allows RuvC to scan DNA until it finds its consensus sequence, where it cleaves and resolves cruciform DNA. This Chloroflexus aurantiacus (strain ATCC 29366 / DSM 635 / J-10-fl) protein is Holliday junction branch migration complex subunit RuvB.